The sequence spans 86 residues: Large ribosomal subunit protein bL31B (86 aa).

It belongs to the bacterial ribosomal protein bL31 family. Type B subfamily. Part of the 50S ribosomal subunit.

The chain is Large ribosomal subunit protein bL31B from Streptococcus agalactiae serotype III (strain NEM316).